The following is a 122-amino-acid chain: Ribosome-binding factor A (122 aa).

The protein belongs to the RbfA family. In terms of assembly, monomer. Binds 30S ribosomal subunits, but not 50S ribosomal subunits or 70S ribosomes.

It localises to the cytoplasm. Its function is as follows. One of several proteins that assist in the late maturation steps of the functional core of the 30S ribosomal subunit. Associates with free 30S ribosomal subunits (but not with 30S subunits that are part of 70S ribosomes or polysomes). Required for efficient processing of 16S rRNA. May interact with the 5'-terminal helix region of 16S rRNA. The polypeptide is Ribosome-binding factor A (Syntrophomonas wolfei subsp. wolfei (strain DSM 2245B / Goettingen)).